Consider the following 94-residue polypeptide: Large ribosomal subunit protein uL23 (94 aa).

It belongs to the universal ribosomal protein uL23 family. In terms of assembly, part of the 50S ribosomal subunit. Contacts protein L29, and trigger factor when it is bound to the ribosome.

Its function is as follows. One of the early assembly proteins it binds 23S rRNA. One of the proteins that surrounds the polypeptide exit tunnel on the outside of the ribosome. Forms the main docking site for trigger factor binding to the ribosome. The polypeptide is Large ribosomal subunit protein uL23 (Dehalococcoides mccartyi (strain ATCC BAA-2266 / KCTC 15142 / 195) (Dehalococcoides ethenogenes (strain 195))).